We begin with the raw amino-acid sequence, 313 residues long: Dehydrogenase/reductase SDR family member 1 (313 aa).

Alanine 2 is subject to N-acetylalanine. Isoleucine 19 serves as a coordination point for NAD(+). Residue arginine 21 is modified to Omega-N-methylarginine. An NAD(+)-binding site is contributed by aspartate 64. Residue serine 151 participates in substrate binding. The NAD(+) site is built by tyrosine 163, lysine 167, and threonine 198. The active-site Proton acceptor is the tyrosine 163. The required for ER localization stretch occupies residues cysteine 235–phenylalanine 313.

Belongs to the short-chain dehydrogenases/reductases (SDR) family. Detected in heart, liver, adrenal glands, and at low levels in skeletal muscle, kidney, pancreas and brain.

The protein resides in the endoplasmic reticulum. It catalyses the reaction 17alpha-estradiol + NADP(+) = estrone + NADPH + H(+). It carries out the reaction testosterone + NADP(+) = androst-4-ene-3,17-dione + NADPH + H(+). The enzyme catalyses prostaglandin E1 + NADPH + H(+) = prostaglandin F1 + NADP(+). The catalysed reaction is isatin + NADPH + H(+) = 3-hydroxyindolin-2-one + NADP(+). In terms of biological role, NADPH-dependent oxidoreductase which catalyzes the reduction of steroids (estrone, androstene-3,17-dione and cortisone) as well as prostaglandin E1, isatin and xenobiotics in vitro. May have a role in steroid and/or xenobiotic metabolism. The sequence is that of Dehydrogenase/reductase SDR family member 1 from Homo sapiens (Human).